The primary structure comprises 560 residues: Vacuolar protein 8 (560 aa).

The N-myristoyl glycine moiety is linked to residue G2. A lipid anchor (S-palmitoyl cysteine) is attached at C4. 9 ARM repeats span residues 39–76, 77–116, 118–157, 159–198, 200–239, 243–282, 284–323, 325–365, and 409–448; these read NRAE…FAEI, TERD…NLAV, TDNK…NLAT, EENK…NMTH, DENR…NIAV, NRRK…NLAS, EKYQ…NISI, PQNE…NLAA, and DELK…NLSS.

The protein belongs to the beta-catenin family.

Its subcellular location is the vacuole membrane. In terms of biological role, functions in both vacuole inheritance and protein targeting from the cytoplasm to vacuole. This is Vacuolar protein 8 (VAC8) from Chaetomium globosum (strain ATCC 6205 / CBS 148.51 / DSM 1962 / NBRC 6347 / NRRL 1970) (Soil fungus).